The sequence spans 221 residues: GTP-binding nuclear protein Ran-1 (221 aa).

Positions 10–174 (DYPSFKLVIV…LYLARKLAGD (165 aa)) constitute a Small GTPase Ran-type domain. Residue 21–28 (DGGTGKTT) participates in GTP binding. The interval 40 to 48 (KKYEPTIGV) is switch-I. GTP is bound by residues glycine 71, 125-128 (NKVD), and 153-155 (SAK). Residues 71–87 (GQEKFGGLRDGYYIHGQ) are switch-II.

Belongs to the small GTPase superfamily. Ran family. Found in a nuclear export complex with RanGTP, exportin and pre-miRNA.

It is found in the nucleus. In terms of biological role, GTP-binding protein involved in nucleocytoplasmic transport. Required for the import of protein into the nucleus and also for RNA export. Involved in chromatin condensation and control of cell cycle. This is GTP-binding nuclear protein Ran-1 (RAN1) from Oryza sativa subsp. indica (Rice).